The primary structure comprises 326 residues: Pyruvate dehydrogenase E1 component subunit beta (326 aa).

Position 62 (E62) interacts with thiamine diphosphate.

Heterodimer of an alpha and a beta chain. The cofactor is thiamine diphosphate.

The enzyme catalyses N(6)-[(R)-lipoyl]-L-lysyl-[protein] + pyruvate + H(+) = N(6)-[(R)-S(8)-acetyldihydrolipoyl]-L-lysyl-[protein] + CO2. In terms of biological role, the pyruvate dehydrogenase complex catalyzes the overall conversion of pyruvate to acetyl-CoA and CO(2). It contains multiple copies of three enzymatic components: pyruvate dehydrogenase (E1), dihydrolipoamide acetyltransferase (E2) and lipoamide dehydrogenase (E3). This Mycoplasma genitalium (strain ATCC 33530 / DSM 19775 / NCTC 10195 / G37) (Mycoplasmoides genitalium) protein is Pyruvate dehydrogenase E1 component subunit beta (pdhB).